Here is a 288-residue protein sequence, read N- to C-terminus: Energy-coupling factor transporter ATP-binding protein EcfA2 (288 aa).

One can recognise an ABC transporter domain in the interval 3–246 (ITFDHVSFTY…PAWLKANQLG (244 aa)). 40–47 (GHTGSGKS) serves as a coordination point for ATP. Residue Glu171 is the Proton acceptor of the active site.

The protein belongs to the ABC transporter superfamily. Energy-coupling factor EcfA family. Forms a stable energy-coupling factor (ECF) transporter complex probably composed of 2 membrane-embedded substrate-binding proteins (S component), 2 ATP-binding proteins (A component) and 2 transmembrane proteins (T component). This complex interacts with a number of substrate-specific components, including FolT and ThiT for 5-formyltetrahydrofolate and thiamine respectively.

It is found in the cell membrane. ATP-binding (A) component of a common energy-coupling factor (ECF) ABC-transporter complex. Unlike classic ABC transporters this ECF transporter provides the energy necessary to transport a number of different substrates including 5-formyltetrahydrofolate and thiamine. Expression of the complex plus FolT or ThiT in Lactococcus lactis subsp. cremoris (strain NZ9000) allows 5-formyltetrahydrofolate or thiamine uptake respectively; 5-formyltetrahydrofolate or thiamine are not taken up in the absence of FolT/ThiT or the EcfA1A2T complex. Deenergized L.lactis subsp. cremoris (treated with 2-deoxyglucose) do not take up substrate. The sequence is that of Energy-coupling factor transporter ATP-binding protein EcfA2 from Lacticaseibacillus paracasei (strain ATCC 334 / BCRC 17002 / CCUG 31169 / CIP 107868 / KCTC 3260 / NRRL B-441) (Lactobacillus paracasei).